The chain runs to 167 residues: Large ribosomal subunit protein bL9 (167 aa).

This sequence belongs to the bacterial ribosomal protein bL9 family.

Its function is as follows. Binds to the 23S rRNA. The chain is Large ribosomal subunit protein bL9 from Nitratidesulfovibrio vulgaris (strain ATCC 29579 / DSM 644 / CCUG 34227 / NCIMB 8303 / VKM B-1760 / Hildenborough) (Desulfovibrio vulgaris).